A 314-amino-acid polypeptide reads, in one-letter code: uncharacterized protein (314 aa).

The first 26 residues, 1-26, serve as a signal peptide directing secretion; sequence MRGRVAGSCAPLGLLLVCLRLPGLFA. Residues 41-60 show a composition bias toward polar residues; it reads GTNLPQLGQPSLTGPPNSEH. Disordered regions lie at residues 41 to 65, 77 to 96, 147 to 191, and 292 to 314; these read GTNL…QPAL, LKLS…SAVQ, GSGP…GKIL, and PPGS…LQWG. The segment covering 147-157 has biased composition (low complexity); that stretch reads GSGPLPGESSP. Over residues 167-177 the composition is skewed to basic and acidic residues; that stretch reads SHLHQDSESRR. Residues 303-314 are compositionally biased toward pro residues; that stretch reads FPNPPSPGLQWG.

As to quaternary structure, binds to numerous extracellular matrix proteins. In terms of tissue distribution, taste cell specific.

It is found in the secreted. It localises to the extracellular space. Its subcellular location is the extracellular matrix. This is an uncharacterized protein from Macaca mulatta (Rhesus macaque).